The following is a 198-amino-acid chain: dITP/XTP pyrophosphatase (198 aa).

9–14 provides a ligand contact to substrate; the sequence is SNNAKK. Residues Asp-41 and Asp-70 each contribute to the Mg(2+) site. Asp-70 serves as the catalytic Proton acceptor. Residues Ser-71, 153 to 156, Lys-176, and 181 to 182 contribute to the substrate site; these read FGYD and HR.

The protein belongs to the HAM1 NTPase family. In terms of assembly, homodimer. Mg(2+) serves as cofactor.

The enzyme catalyses XTP + H2O = XMP + diphosphate + H(+). It carries out the reaction dITP + H2O = dIMP + diphosphate + H(+). It catalyses the reaction ITP + H2O = IMP + diphosphate + H(+). Functionally, pyrophosphatase that catalyzes the hydrolysis of nucleoside triphosphates to their monophosphate derivatives, with a high preference for the non-canonical purine nucleotides XTP (xanthosine triphosphate), dITP (deoxyinosine triphosphate) and ITP. Seems to function as a house-cleaning enzyme that removes non-canonical purine nucleotides from the nucleotide pool, thus preventing their incorporation into DNA/RNA and avoiding chromosomal lesions. This chain is dITP/XTP pyrophosphatase, found in Aromatoleum aromaticum (strain DSM 19018 / LMG 30748 / EbN1) (Azoarcus sp. (strain EbN1)).